A 296-amino-acid chain; its full sequence is Homoserine kinase (296 aa).

85-95 provides a ligand contact to ATP; that stretch reads PVARGLGSSAA.

This sequence belongs to the GHMP kinase family. Homoserine kinase subfamily.

It localises to the cytoplasm. The catalysed reaction is L-homoserine + ATP = O-phospho-L-homoserine + ADP + H(+). It participates in amino-acid biosynthesis; L-threonine biosynthesis; L-threonine from L-aspartate: step 4/5. Functionally, catalyzes the ATP-dependent phosphorylation of L-homoserine to L-homoserine phosphate. The sequence is that of Homoserine kinase from Moorella thermoacetica (strain ATCC 39073 / JCM 9320).